A 261-amino-acid polypeptide reads, in one-letter code: Zinc import ATP-binding protein ZnuC (261 aa).

An ABC transporter domain is found at 5–220 (ISLKALSVTF…PSYIALFGSA (216 aa)). Position 37-44 (37-44 (GPNGAGKS)) interacts with ATP. The segment at 236–261 (HHDLAGQPVSGDATQCNHHHHGHHHD) is disordered. Residues 252 to 261 (NHHHHGHHHD) are compositionally biased toward basic residues.

The protein belongs to the ABC transporter superfamily. Zinc importer (TC 3.A.1.15.5) family. The complex is composed of two ATP-binding proteins (ZnuC), two transmembrane proteins (ZnuB) and a solute-binding protein (ZnuA).

It is found in the cell inner membrane. The catalysed reaction is Zn(2+)(out) + ATP(in) + H2O(in) = Zn(2+)(in) + ADP(in) + phosphate(in) + H(+)(in). Part of the ABC transporter complex ZnuABC involved in zinc import. Responsible for energy coupling to the transport system. This Vibrio vulnificus (strain CMCP6) protein is Zinc import ATP-binding protein ZnuC.